Reading from the N-terminus, the 166-residue chain is Putative tRNA (cytidine(34)-2'-O)-methyltransferase (166 aa).

Residues L83, G109, I130, and S138 each coordinate S-adenosyl-L-methionine.

The protein belongs to the class IV-like SAM-binding methyltransferase superfamily. RNA methyltransferase TrmH family. TrmL subfamily.

The protein resides in the cytoplasm. The enzyme catalyses cytidine(34) in tRNA + S-adenosyl-L-methionine = 2'-O-methylcytidine(34) in tRNA + S-adenosyl-L-homocysteine + H(+). It catalyses the reaction 5-carboxymethylaminomethyluridine(34) in tRNA(Leu) + S-adenosyl-L-methionine = 5-carboxymethylaminomethyl-2'-O-methyluridine(34) in tRNA(Leu) + S-adenosyl-L-homocysteine + H(+). Could methylate the ribose at the nucleotide 34 wobble position in tRNA. This chain is Putative tRNA (cytidine(34)-2'-O)-methyltransferase, found in Mycoplasma pneumoniae (strain ATCC 29342 / M129 / Subtype 1) (Mycoplasmoides pneumoniae).